Consider the following 512-residue polypeptide: Bifunctional purine biosynthesis protein PurH (512 aa).

In terms of domain architecture, MGS-like spans 1–146 (MTIKRALISV…KNHQDVTVIV (146 aa)).

This sequence belongs to the PurH family.

It carries out the reaction (6R)-10-formyltetrahydrofolate + 5-amino-1-(5-phospho-beta-D-ribosyl)imidazole-4-carboxamide = 5-formamido-1-(5-phospho-D-ribosyl)imidazole-4-carboxamide + (6S)-5,6,7,8-tetrahydrofolate. The catalysed reaction is IMP + H2O = 5-formamido-1-(5-phospho-D-ribosyl)imidazole-4-carboxamide. It participates in purine metabolism; IMP biosynthesis via de novo pathway; 5-formamido-1-(5-phospho-D-ribosyl)imidazole-4-carboxamide from 5-amino-1-(5-phospho-D-ribosyl)imidazole-4-carboxamide (10-formyl THF route): step 1/1. Its pathway is purine metabolism; IMP biosynthesis via de novo pathway; IMP from 5-formamido-1-(5-phospho-D-ribosyl)imidazole-4-carboxamide: step 1/1. The polypeptide is Bifunctional purine biosynthesis protein PurH (Bacillus subtilis (strain 168)).